The primary structure comprises 260 residues: Meiotic recombination protein rec6 (260 aa).

The interval 197–222 (QYSESSLLDDSQLLCSSPPVDSTEEA) is disordered. Residues 199–213 (SESSLLDDSQLLCSS) show a composition bias toward low complexity.

Belongs to the TOP6B-like family. In terms of assembly, component of the DSB catalytic core (DSBC) complex, composed of at least rec12, rec6 and rec14. The complex interacts with mde2.

In terms of biological role, required for formation of the rec12-mediated double-strand breaks (DSBs) that initiate meiotic recombination. May be involved primarily in the early steps of meiotic recombination. In Schizosaccharomyces pombe (strain 972 / ATCC 24843) (Fission yeast), this protein is Meiotic recombination protein rec6.